A 409-amino-acid polypeptide reads, in one-letter code: Elongation factor Tu (409 aa).

Residues 10–214 (KPHVNIGTIG…AVDAYIPTPE (205 aa)) form the tr-type G domain. The G1 stretch occupies residues 19–26 (GHVDHGKT). Residue 19–26 (GHVDHGKT) participates in GTP binding. Position 26 (Thr-26) interacts with Mg(2+). The segment at 60–64 (GITIN) is G2. The G3 stretch occupies residues 81–84 (DCPG). GTP-binding positions include 81–85 (DCPGH) and 136–139 (NKKD). The G4 stretch occupies residues 136-139 (NKKD). Positions 174-176 (SAL) are G5.

This sequence belongs to the TRAFAC class translation factor GTPase superfamily. Classic translation factor GTPase family. EF-Tu/EF-1A subfamily. Monomer.

Its subcellular location is the cytoplasm. The catalysed reaction is GTP + H2O = GDP + phosphate + H(+). GTP hydrolase that promotes the GTP-dependent binding of aminoacyl-tRNA to the A-site of ribosomes during protein biosynthesis. This Gloeobacter violaceus (strain ATCC 29082 / PCC 7421) protein is Elongation factor Tu.